The chain runs to 589 residues: Arginine--tRNA ligase (589 aa).

Residues 131 to 141 carry the 'HIGH' region motif; it reads ANPTGPLHVGH.

This sequence belongs to the class-I aminoacyl-tRNA synthetase family. As to quaternary structure, monomer.

The protein resides in the cytoplasm. The catalysed reaction is tRNA(Arg) + L-arginine + ATP = L-arginyl-tRNA(Arg) + AMP + diphosphate. The sequence is that of Arginine--tRNA ligase from Legionella pneumophila subsp. pneumophila (strain Philadelphia 1 / ATCC 33152 / DSM 7513).